We begin with the raw amino-acid sequence, 474 residues long: 4-O-methyl-glucuronoyl methylesterase (474 aa).

The first 17 residues, 1–17, serve as a signal peptide directing secretion; it reads MFKPSFVALALVSYATA. The 37-residue stretch at 19–55 folds into the CBM1 domain; it reads ASAPQWGQCGGIGWTGPTACPSGWACQQLNAYYSQCL. Residues 61–91 are disordered; sequence APARTTAAPPPPPATTAAPPPPTTSAPTGSS. The segment covering 68–84 has biased composition (pro residues); that stretch reads APPPPPATTAAPPPPTT. The N-linked (GlcNAc...) asparagine glycan is linked to Asn120. A GXSYXG catalytic site motif motif is present at residues 284 to 289; that stretch reads GCSRDG. 2 cysteine pairs are disulfide-bonded: Cys285-Cys421 and Cys317-Cys393. Ser286 serves as the catalytic Nucleophile. Substrate is bound by residues Lys290, Gln332, Glu340, and Trp384. The active-site Proton donor/acceptor is the His420.

This sequence belongs to the carbohydrate esterase 15 (CE15) family. Post-translationally, N-glycosylated.

The protein localises to the secreted. The enzyme catalyses a 4-O-methyl-alpha-D-glucuronosyl ester derivative + H2O = 4-O-methyl-alpha-D-glucuronate derivative + an alcohol + H(+). Functionally, glucuronoyl esterase which may play a significant role in biomass degradation, as it is considered to disconnect hemicellulose from lignin through the hydrolysis of the ester bond between 4-O-methyl-D-glucuronic acid residues of glucuronoxylans and aromatic alcohols of lignin. This is 4-O-methyl-glucuronoyl methylesterase from Cerrena unicolor (Canker rot fungus).